Here is a 943-residue protein sequence, read N- to C-terminus: Isoleucine--tRNA ligase (943 aa).

The 'HIGH' region motif lies at 58–68 (PYANGNIHIGH). An L-isoleucyl-5'-AMP-binding site is contributed by Glu-567. Residues 608-612 (KMSKS) carry the 'KMSKS' region motif. Lys-611 is a binding site for ATP. Positions 906, 909, 926, and 929 each coordinate Zn(2+).

Belongs to the class-I aminoacyl-tRNA synthetase family. IleS type 1 subfamily. Monomer. Zn(2+) serves as cofactor.

The protein localises to the cytoplasm. The catalysed reaction is tRNA(Ile) + L-isoleucine + ATP = L-isoleucyl-tRNA(Ile) + AMP + diphosphate. In terms of biological role, catalyzes the attachment of isoleucine to tRNA(Ile). As IleRS can inadvertently accommodate and process structurally similar amino acids such as valine, to avoid such errors it has two additional distinct tRNA(Ile)-dependent editing activities. One activity is designated as 'pretransfer' editing and involves the hydrolysis of activated Val-AMP. The other activity is designated 'posttransfer' editing and involves deacylation of mischarged Val-tRNA(Ile). This Stutzerimonas stutzeri (strain A1501) (Pseudomonas stutzeri) protein is Isoleucine--tRNA ligase.